The following is a 264-amino-acid chain: Thymidylate synthase (264 aa).

Arg21 contributes to the dUMP binding site. His51 lines the (6R)-5,10-methylene-5,6,7,8-tetrahydrofolate pocket. DUMP is bound at residue 126–127; the sequence is RR. Residue Cys146 is the Nucleophile of the active site. Residues 166–169, Asn177, and 207–209 each bind dUMP; these read RSAD and HLY. Asp169 is a (6R)-5,10-methylene-5,6,7,8-tetrahydrofolate binding site. Residue Ser263 coordinates (6R)-5,10-methylene-5,6,7,8-tetrahydrofolate.

Belongs to the thymidylate synthase family. Bacterial-type ThyA subfamily. As to quaternary structure, homodimer.

The protein localises to the cytoplasm. It carries out the reaction dUMP + (6R)-5,10-methylene-5,6,7,8-tetrahydrofolate = 7,8-dihydrofolate + dTMP. The protein operates within pyrimidine metabolism; dTTP biosynthesis. Catalyzes the reductive methylation of 2'-deoxyuridine-5'-monophosphate (dUMP) to 2'-deoxythymidine-5'-monophosphate (dTMP) while utilizing 5,10-methylenetetrahydrofolate (mTHF) as the methyl donor and reductant in the reaction, yielding dihydrofolate (DHF) as a by-product. This enzymatic reaction provides an intracellular de novo source of dTMP, an essential precursor for DNA biosynthesis. This is Thymidylate synthase from Neisseria meningitidis serogroup C / serotype 2a (strain ATCC 700532 / DSM 15464 / FAM18).